Consider the following 405-residue polypeptide: Acetyl-CoA decarbonylase/synthase complex subunit delta (405 aa).

It belongs to the CdhD family. As to quaternary structure, heterodimer of delta and gamma chains. The ACDS complex is made up of alpha, epsilon, beta, gamma and delta chains with a probable stoichiometry of (alpha(2)epsilon(2))(4)-beta(8)-(gamma(1)delta(1))(8).

Its function is as follows. Part of a complex that catalyzes the reversible cleavage of acetyl-CoA, allowing autotrophic growth from CO(2). Probably maintains the overall quaternary structure of the ACDS complex. This is Acetyl-CoA decarbonylase/synthase complex subunit delta from Methanocaldococcus jannaschii (strain ATCC 43067 / DSM 2661 / JAL-1 / JCM 10045 / NBRC 100440) (Methanococcus jannaschii).